The following is a 111-amino-acid chain: Large ribosomal subunit protein uL22 (111 aa).

This sequence belongs to the universal ribosomal protein uL22 family. As to quaternary structure, part of the 50S ribosomal subunit.

Functionally, this protein binds specifically to 23S rRNA; its binding is stimulated by other ribosomal proteins, e.g. L4, L17, and L20. It is important during the early stages of 50S assembly. It makes multiple contacts with different domains of the 23S rRNA in the assembled 50S subunit and ribosome. Its function is as follows. The globular domain of the protein is located near the polypeptide exit tunnel on the outside of the subunit, while an extended beta-hairpin is found that lines the wall of the exit tunnel in the center of the 70S ribosome. In Wigglesworthia glossinidia brevipalpis, this protein is Large ribosomal subunit protein uL22.